The chain runs to 87 residues: Small ribosomal subunit protein bS20 (87 aa).

The span at 1–11 (MANIKSAKKRA) shows a compositional bias: basic residues. The interval 1–26 (MANIKSAKKRAVQSEKRRQHNASQRS) is disordered.

It belongs to the bacterial ribosomal protein bS20 family.

In terms of biological role, binds directly to 16S ribosomal RNA. This chain is Small ribosomal subunit protein bS20, found in Actinobacillus pleuropneumoniae serotype 5b (strain L20).